The sequence spans 361 residues: S-adenosylmethionine:tRNA ribosyltransferase-isomerase (361 aa).

The protein belongs to the QueA family. Monomer.

It is found in the cytoplasm. The catalysed reaction is 7-aminomethyl-7-carbaguanosine(34) in tRNA + S-adenosyl-L-methionine = epoxyqueuosine(34) in tRNA + adenine + L-methionine + 2 H(+). It functions in the pathway tRNA modification; tRNA-queuosine biosynthesis. Transfers and isomerizes the ribose moiety from AdoMet to the 7-aminomethyl group of 7-deazaguanine (preQ1-tRNA) to give epoxyqueuosine (oQ-tRNA). The chain is S-adenosylmethionine:tRNA ribosyltransferase-isomerase from Haemophilus ducreyi (strain 35000HP / ATCC 700724).